The following is a 94-amino-acid chain: (2R)-sulfolactate sulfo-lyase subunit alpha (94 aa).

The region spanning 16–90 (VVVVEGVEAG…GEHVHVHNVK (75 aa)) is the AFP-like domain.

As to quaternary structure, (2R)-sulfolactate sulfo-lyase is composed of a SuyA and a SuyB subunit.

The protein resides in the cytoplasm. The catalysed reaction is (2R)-3-sulfolactate = sulfite + pyruvate + H(+). Its function is as follows. Together with SuyB, desulfonates sulfolactate to pyruvate and sulfite. This is (2R)-sulfolactate sulfo-lyase subunit alpha (suyA) from Chromohalobacter salexigens (strain ATCC BAA-138 / DSM 3043 / CIP 106854 / NCIMB 13768 / 1H11).